The chain runs to 63 residues: Keratin-associated protein 19-8 (63 aa).

The protein belongs to the KRTAP type 19 family. As to quaternary structure, interacts with hair keratins.

In the hair cortex, hair keratin intermediate filaments are embedded in an interfilamentous matrix, consisting of hair keratin-associated proteins (KRTAP), which are essential for the formation of a rigid and resistant hair shaft through their extensive disulfide bond cross-linking with abundant cysteine residues of hair keratins. The matrix proteins include the high-sulfur and high-glycine-tyrosine keratins. This chain is Keratin-associated protein 19-8 (KRTAP19-8), found in Homo sapiens (Human).